A 349-amino-acid chain; its full sequence is Phosphoribosylformylglycinamidine cyclo-ligase (349 aa).

This sequence belongs to the AIR synthase family.

It is found in the cytoplasm. It carries out the reaction 2-formamido-N(1)-(5-O-phospho-beta-D-ribosyl)acetamidine + ATP = 5-amino-1-(5-phospho-beta-D-ribosyl)imidazole + ADP + phosphate + H(+). Its pathway is purine metabolism; IMP biosynthesis via de novo pathway; 5-amino-1-(5-phospho-D-ribosyl)imidazole from N(2)-formyl-N(1)-(5-phospho-D-ribosyl)glycinamide: step 2/2. In Methanococcus maripaludis (strain C7 / ATCC BAA-1331), this protein is Phosphoribosylformylglycinamidine cyclo-ligase.